Here is a 322-residue protein sequence, read N- to C-terminus: UDP-N-acetylenolpyruvoylglucosamine reductase (322 aa).

Residues 36 to 202 (RAGGPAQVLF…TSVLFEGVPG (167 aa)) enclose the FAD-binding PCMH-type domain. R182 is a catalytic residue. S231 acts as the Proton donor in catalysis. Residue E301 is part of the active site.

Belongs to the MurB family. FAD serves as cofactor.

It is found in the cytoplasm. It carries out the reaction UDP-N-acetyl-alpha-D-muramate + NADP(+) = UDP-N-acetyl-3-O-(1-carboxyvinyl)-alpha-D-glucosamine + NADPH + H(+). The protein operates within cell wall biogenesis; peptidoglycan biosynthesis. Cell wall formation. The chain is UDP-N-acetylenolpyruvoylglucosamine reductase from Brucella suis biovar 1 (strain 1330).